The chain runs to 215 residues: Thymidylate kinase (215 aa).

An ATP-binding site is contributed by 11–18 (GIDGAGKS).

The protein belongs to the thymidylate kinase family.

The catalysed reaction is dTMP + ATP = dTDP + ADP. Its function is as follows. Phosphorylation of dTMP to form dTDP in both de novo and salvage pathways of dTTP synthesis. The chain is Thymidylate kinase from Nitrosomonas eutropha (strain DSM 101675 / C91 / Nm57).